The chain runs to 323 residues: Sphingolipid delta(4)-desaturase DES1 (323 aa).

Gly2 is lipidated: N-myristoyl glycine. 2 helical membrane-spanning segments follow: residues 41–61 and 68–88; these read SNLI…FYLV and WVLF…TLAI. The Histidine box-1 signature appears at 89–93; that stretch reads HEVSH. Residues 102 to 122 form a helical membrane-spanning segment; it reads AMWNRWFGIFANLPIGVPYSV. Residues 128–132 carry the Histidine box-2 motif; that stretch reads HMDHH. The next 3 membrane-spanning stretches (helical) occupy residues 152–172, 184–204, and 209–229; these read FFCT…FYAF, YLEI…YYVL, and LVYM…SGHF. The Histidine box-3 signature appears at 259-263; sequence HNEHH. Residue Ser307 is modified to Phosphoserine.

This sequence belongs to the fatty acid desaturase type 1 family. DEGS subfamily. In terms of assembly, interacts with RLBP1; the interaction increases synthesis of chromophore-precursors by DEGS1. Myristoylation can target the enzyme to the mitochondria leading to an increase in ceramide levels.

It is found in the mitochondrion membrane. It localises to the endoplasmic reticulum membrane. The catalysed reaction is an N-acylsphinganine + 2 Fe(II)-[cytochrome b5] + O2 + 2 H(+) = an N-acylsphing-4-enine + 2 Fe(III)-[cytochrome b5] + 2 H2O. The enzyme catalyses all-trans-retinol = 11-cis-retinol. It catalyses the reaction all-trans-retinol = 9-cis-retinol. It carries out the reaction all-trans-retinol = 13-cis-retinol. The catalysed reaction is 11-cis-retinol = 13-cis-retinol. The enzyme catalyses 11-cis-retinol = 9-cis-retinol. Its function is as follows. Has sphingolipid-delta-4-desaturase activity. Converts D-erythro-sphinganine to D-erythro-sphingosine (E-sphing-4-enine). Catalyzes the equilibrium isomerization of retinols. The protein is Sphingolipid delta(4)-desaturase DES1 (DEGS1) of Bos taurus (Bovine).